We begin with the raw amino-acid sequence, 443 residues long: MVKYEDKISLYDAKGNLVAENVPLEAISPLYNPTIKSMLKNIKRTVAVNLADIENTLATGSIGGKGCKVPGRTLDLSVVSNAQAIADEVEKILKVSKDDDTAIKLINGGKQMAVQVPSERLEVAAEYSVSMLATAMALKEAIIKTFNVDMFEGSTVHASIMGNYPQVMDYAGGNIASLLGAPSNLEGLGYALRNIPVNHAVATTKKNMMNAIAFSSVMEQTATFEMGDAIGSFERQHLLGLAYQGLNADNLVIEFIKANGKGTVGTVVQSVVERALADGVIVVDKTMGSGFNMYKPADVNKWNAYAAAGLVAAAAVSCGAARAAQNIASVILYYNDILEYETGLPGVDYGRSMGTAVGFSFFSHSIYGGGGPGIFNGNHVVTRHSKGFAIPPVCAAMCADAGTQMFSPEHTSALVGAVYSAFDEFREPMKYVIERALNIKDKL.

Tyr-367 is a binding site for coenzyme M. A coenzyme B-binding site is contributed by Gly-369.

The protein belongs to the methyl-coenzyme M reductase beta subunit family. As to quaternary structure, MCR is a hexamer of two alpha, two beta, and two gamma chains, forming a dimer of heterotrimers. Requires coenzyme F430 as cofactor.

The protein localises to the cytoplasm. It carries out the reaction coenzyme B + methyl-coenzyme M = methane + coenzyme M-coenzyme B heterodisulfide. It participates in one-carbon metabolism; methyl-coenzyme M reduction; methane from methyl-coenzyme M: step 1/1. Component of the methyl-coenzyme M reductase (MCR) I that catalyzes the reductive cleavage of methyl-coenzyme M (CoM-S-CH3 or 2-(methylthio)ethanesulfonate) using coenzyme B (CoB or 7-mercaptoheptanoylthreonine phosphate) as reductant which results in the production of methane and the mixed heterodisulfide of CoB and CoM (CoM-S-S-CoB). This is the final step in methanogenesis. The chain is Methyl-coenzyme M reductase subunit beta (mcrB) from Methanococcus vannielii.